We begin with the raw amino-acid sequence, 249 residues long: Leucyl/phenylalanyl-tRNA--protein transferase (249 aa).

The segment at 1–21 (MSRTLPHLLSPDPASPFPPAE) is disordered.

This sequence belongs to the L/F-transferase family.

It localises to the cytoplasm. It catalyses the reaction N-terminal L-lysyl-[protein] + L-leucyl-tRNA(Leu) = N-terminal L-leucyl-L-lysyl-[protein] + tRNA(Leu) + H(+). The enzyme catalyses N-terminal L-arginyl-[protein] + L-leucyl-tRNA(Leu) = N-terminal L-leucyl-L-arginyl-[protein] + tRNA(Leu) + H(+). The catalysed reaction is L-phenylalanyl-tRNA(Phe) + an N-terminal L-alpha-aminoacyl-[protein] = an N-terminal L-phenylalanyl-L-alpha-aminoacyl-[protein] + tRNA(Phe). In terms of biological role, functions in the N-end rule pathway of protein degradation where it conjugates Leu, Phe and, less efficiently, Met from aminoacyl-tRNAs to the N-termini of proteins containing an N-terminal arginine or lysine. The chain is Leucyl/phenylalanyl-tRNA--protein transferase from Xanthomonas campestris pv. campestris (strain B100).